Here is a 550-residue protein sequence, read N- to C-terminus: Arginine--tRNA ligase (550 aa).

Positions 122–132 (GNPTGPLHLAH) match the 'HIGH' region motif.

The protein belongs to the class-I aminoacyl-tRNA synthetase family. As to quaternary structure, monomer.

The protein resides in the cytoplasm. The catalysed reaction is tRNA(Arg) + L-arginine + ATP = L-arginyl-tRNA(Arg) + AMP + diphosphate. The protein is Arginine--tRNA ligase of Tropheryma whipplei (strain TW08/27) (Whipple's bacillus).